Here is a 150-residue protein sequence, read N- to C-terminus: 3-dehydroquinate dehydratase (150 aa).

Tyrosine 26 functions as the Proton acceptor in the catalytic mechanism. Asparagine 77, histidine 83, and aspartate 90 together coordinate substrate. Histidine 103 serves as the catalytic Proton donor. Substrate-binding positions include 104-105 (LS) and arginine 114.

The protein belongs to the type-II 3-dehydroquinase family. Homododecamer.

It carries out the reaction 3-dehydroquinate = 3-dehydroshikimate + H2O. It participates in metabolic intermediate biosynthesis; chorismate biosynthesis; chorismate from D-erythrose 4-phosphate and phosphoenolpyruvate: step 3/7. Functionally, catalyzes a trans-dehydration via an enolate intermediate. The polypeptide is 3-dehydroquinate dehydratase (Photobacterium profundum (strain SS9)).